A 307-amino-acid polypeptide reads, in one-letter code: Homoserine kinase (307 aa).

91–101 (PLARGLGSSAA) provides a ligand contact to ATP.

The protein belongs to the GHMP kinase family. Homoserine kinase subfamily.

The protein resides in the cytoplasm. It catalyses the reaction L-homoserine + ATP = O-phospho-L-homoserine + ADP + H(+). It participates in amino-acid biosynthesis; L-threonine biosynthesis; L-threonine from L-aspartate: step 4/5. Catalyzes the ATP-dependent phosphorylation of L-homoserine to L-homoserine phosphate. The chain is Homoserine kinase from Deinococcus radiodurans (strain ATCC 13939 / DSM 20539 / JCM 16871 / CCUG 27074 / LMG 4051 / NBRC 15346 / NCIMB 9279 / VKM B-1422 / R1).